Consider the following 677-residue polypeptide: Epithelial splicing regulatory protein 1 (677 aa).

RRM domains lie at 225–302, 326–406, and 445–525; these read TVVR…KATG, VIVR…RSTA, and DCVR…QCSA. Serine 543 carries the phosphoserine modification. An Omega-N-methylarginine modification is found at arginine 578.

It belongs to the ESRP family.

It is found in the nucleus. MRNA splicing factor that regulates the formation of epithelial cell-specific isoforms. Specifically regulates the expression of FGFR2-IIIb, an epithelial cell-specific isoform of FGFR2. Also regulates the splicing of CD44, CTNND1, ENAH, 3 transcripts that undergo changes in splicing during the epithelial-to-mesenchymal transition (EMT). Acts by directly binding specific sequences in mRNAs. Binds the GU-rich sequence motifs in the ISE/ISS-3, a cis-element regulatory region present in the mRNA of FGFR2. Regulates splicing and expression of genes involved in inner ear development, auditory hair cell differentiation, and cell fate specification in the cochlear epithelium. In Rattus norvegicus (Rat), this protein is Epithelial splicing regulatory protein 1 (Esrp1).